Reading from the N-terminus, the 269-residue chain is Triosephosphate isomerase (269 aa).

8 to 10 contacts substrate; the sequence is NWK. H105 serves as the catalytic Electrophile. Catalysis depends on E183, which acts as the Proton acceptor. Residues G189, S227, and 248–249 each bind substrate; that span reads GG.

It belongs to the triosephosphate isomerase family. As to quaternary structure, homodimer.

The protein resides in the cytoplasm. It catalyses the reaction D-glyceraldehyde 3-phosphate = dihydroxyacetone phosphate. It functions in the pathway carbohydrate biosynthesis; gluconeogenesis. It participates in carbohydrate degradation; glycolysis; D-glyceraldehyde 3-phosphate from glycerone phosphate: step 1/1. In terms of biological role, involved in the gluconeogenesis. Catalyzes stereospecifically the conversion of dihydroxyacetone phosphate (DHAP) to D-glyceraldehyde-3-phosphate (G3P). The protein is Triosephosphate isomerase of Psychrobacter cryohalolentis (strain ATCC BAA-1226 / DSM 17306 / VKM B-2378 / K5).